A 157-amino-acid polypeptide reads, in one-letter code: Cyclic pyranopterin monophosphate synthase (157 aa).

Substrate-binding positions include 75 to 77 (LCH) and 111 to 112 (ME). The active site involves Asp-126.

This sequence belongs to the MoaC family. Homohexamer; trimer of dimers.

The catalysed reaction is (8S)-3',8-cyclo-7,8-dihydroguanosine 5'-triphosphate = cyclic pyranopterin phosphate + diphosphate. It functions in the pathway cofactor biosynthesis; molybdopterin biosynthesis. Its function is as follows. Catalyzes the conversion of (8S)-3',8-cyclo-7,8-dihydroguanosine 5'-triphosphate to cyclic pyranopterin monophosphate (cPMP). This chain is Cyclic pyranopterin monophosphate synthase, found in Novosphingobium aromaticivorans (strain ATCC 700278 / DSM 12444 / CCUG 56034 / CIP 105152 / NBRC 16084 / F199).